The sequence spans 529 residues: MQRLEALGIHPKKRVFWNTVSPVLVEHTLLRGEGLLAHHGPLVVDTTPYTGRSPKDKFVVREPEVEGEIWWGEVNQPFAPEAFEALYQRVVQYLSERDLYVQDLYAGADRRYRLAVRVVTESPWHALFARNMFILPRRFGNDDEVEAFVPGFTVVHAPYFQAVPERDGTRSEVFVGISFQRRLVLIVGTKYAGEIKKSIFTVMNYLMPKRGVFPMHASANVGKEGDVAVFFGLSGTGKTTLSTDPERPLIGDDEHGWSEDGVFNFEGGCYAKVIRLSPEHEPLIYKASNQFEAILENVVVNPESRRVQWDDDSKTENTRSSYPIAHLENVVESGVAGHPRAIFFLSADAYGVLPPIARLSPEEAMYYFLSGYTARVAGTERGVTEPRATFSACFGAPFLPMHPGVYARMLGEKIRKHAPRVYLVNTGWTGGPYGVGYRFPLPVTRALLKAALSGALENVPYRRDPVFGFEVPLEAPGVPQELLNPRETWADKEAYDQQARKLARLFQENFQKYASGVAKEVAEAGPRTE.

Arg52 serves as a coordination point for substrate. Residues Arg130, Asn131, and Phe133 each coordinate Ca(2+). 2 residues coordinate substrate: Tyr191 and Lys197. ATP contacts are provided by residues Lys197, His216, and 232 to 240 (GLSGTGKTT). Lys197 and His216 together coordinate Mn(2+). Asp253 is a Mn(2+) binding site. Gly267 is a binding site for Ca(2+). ATP-binding positions include Glu281, Arg319, 438 to 439 (RF), Phe439, and Thr444. Residue Arg319 participates in substrate binding.

Belongs to the phosphoenolpyruvate carboxykinase (ATP) family. As to quaternary structure, dimer of dimers. Requires Mn(2+) as cofactor.

Its subcellular location is the cytoplasm. The catalysed reaction is oxaloacetate + ATP = phosphoenolpyruvate + ADP + CO2. It participates in carbohydrate biosynthesis; gluconeogenesis. Allosterically activated by calcium. Its function is as follows. Involved in gluconeogenesis. Catalyzes the conversion of oxaloacetate (OAA) to phosphoenolpyruvate (PEP) through direct phosphoryl transfer between the nucleoside triphosphate and OAA. This chain is Phosphoenolpyruvate carboxykinase (ATP), found in Thermus thermophilus (strain ATCC 27634 / DSM 579 / HB8).